Reading from the N-terminus, the 411-residue chain is Heterogeneous nuclear ribonucleoprotein 1 (411 aa).

One can recognise an RRM 1 domain in the interval 6 to 82 (GKLFVGGISW…REVDVKRAMS (77 aa)). Disordered stretches follow at residues 81–103 (MSRE…SSGG), 183–221 (KRAL…DGRM), and 358–411 (AAYG…RQGQ). Residues 87–101 (QVSGRTGNLNTSRSS) are compositionally biased toward polar residues. In terms of domain architecture, RRM 2 spans 110–187 (KKIFVGGLPP…KQVEVKRALP (78 aa)). 3 stretches are compositionally biased toward gly residues: residues 192-212 (PGGG…GYGG), 362-387 (VVGG…GYGD), and 397-411 (GYGG…RQGQ). Residues 341–390 (GYGYGGYSGSDSGYGNQAAYGVVGGRPSGGGSNNPGSGGYMGGGYGDGSW) are nuclear targeting sequence (M9).

Component of the spliceosome. Interacts with TRN1.

The protein resides in the nucleus. Its subcellular location is the cytoplasm. Its function is as follows. Involved with pre-mRNA processing. Forms complexes (ribonucleosomes) with at least 20 other different hnRNP and heterogeneous nuclear RNA in the nucleus. Functionally, involved in the packaging of pre-mRNA into hnRNP particles, transport of poly(A) mRNA from the nucleus to the cytoplasm and may modulate splice site selection. The protein is Heterogeneous nuclear ribonucleoprotein 1 (RNP1) of Arabidopsis thaliana (Mouse-ear cress).